Consider the following 420-residue polypeptide: Glucose-1-phosphate adenylyltransferase (420 aa).

Residues Tyr107, Gly173, 188 to 189 (EK), and Ser206 each bind alpha-D-glucose 1-phosphate.

The protein belongs to the bacterial/plant glucose-1-phosphate adenylyltransferase family. In terms of assembly, homotetramer.

The enzyme catalyses alpha-D-glucose 1-phosphate + ATP + H(+) = ADP-alpha-D-glucose + diphosphate. The protein operates within glycan biosynthesis; glycogen biosynthesis. Its function is as follows. Involved in the biosynthesis of ADP-glucose, a building block required for the elongation reactions to produce glycogen. Catalyzes the reaction between ATP and alpha-D-glucose 1-phosphate (G1P) to produce pyrophosphate and ADP-Glc. In Shewanella sp. (strain ANA-3), this protein is Glucose-1-phosphate adenylyltransferase.